The primary structure comprises 228 residues: Octanoyltransferase (228 aa).

Residues 32 to 214 form the BPL/LPL catalytic domain; that stretch reads DVVPDTVLLV…HLRRLFERDW (183 aa). Residues 77 to 84, 144 to 146, and 157 to 159 contribute to the substrate site; these read RGGDVTYH, SVG, and GIA. The active-site Acyl-thioester intermediate is cysteine 175.

This sequence belongs to the LipB family.

It is found in the cytoplasm. The enzyme catalyses octanoyl-[ACP] + L-lysyl-[protein] = N(6)-octanoyl-L-lysyl-[protein] + holo-[ACP] + H(+). Its pathway is protein modification; protein lipoylation via endogenous pathway; protein N(6)-(lipoyl)lysine from octanoyl-[acyl-carrier-protein]: step 1/2. In terms of biological role, catalyzes the transfer of endogenously produced octanoic acid from octanoyl-acyl-carrier-protein onto the lipoyl domains of lipoate-dependent enzymes. Lipoyl-ACP can also act as a substrate although octanoyl-ACP is likely to be the physiological substrate. This chain is Octanoyltransferase, found in Syntrophobacter fumaroxidans (strain DSM 10017 / MPOB).